A 101-amino-acid polypeptide reads, in one-letter code: Trp operon repressor homolog (101 aa).

A DNA-binding region spans residues 59 to 82 (QREIAQKYGVSIAQITRGSNALKA).

Belongs to the TrpR family. As to quaternary structure, homodimer.

The protein resides in the cytoplasm. Its function is as follows. This protein is an aporepressor. When complexed with L-tryptophan it binds the operator region of the trp operon and prevents the initiation of transcription. The chain is Trp operon repressor homolog from Chlamydia caviae (strain ATCC VR-813 / DSM 19441 / 03DC25 / GPIC) (Chlamydophila caviae).